A 1019-amino-acid chain; its full sequence is Photoactivated adenylate cyclase subunit alpha-like protein FB (1019 aa).

Positions 55–148 constitute a BLUF 1 domain; that stretch reads LRRLMYLSAS…GRLYGEWHMK (94 aa). Residues 204–332 enclose the Guanylate cyclase 1 domain; it reads VVTFIYLVEF…DCINTASRIT (129 aa). Residues 467 to 559 form the BLUF 2 domain; sequence LITLTYISQA…REYGSPLDMT (93 aa). Positions 615–744 constitute a Guanylate cyclase 2 domain; that stretch reads VLLATDICSF…EVSARVMEVV (130 aa). Low complexity predominate over residues 825-839; that stretch reads APGRGAPAGGIPSSP. The segment at 825-862 is disordered; sequence APGRGAPAGGIPSSPKVRPPGRTNSVSSYTPDPNEALD. A compositionally biased stretch (polar residues) spans 846-855; the sequence is RTNSVSSYTP.

The protein belongs to the adenylyl cyclase class-4/guanylyl cyclase family. As to quaternary structure, heterotetramer of two alpha and two beta subunits.

It is found in the cell projection. The protein resides in the cilium. Its subcellular location is the flagellum. The sequence is that of Photoactivated adenylate cyclase subunit alpha-like protein FB from Euglena gracilis.